A 131-amino-acid polypeptide reads, in one-letter code: Holo-[acyl-carrier-protein] synthase (131 aa).

Mg(2+) contacts are provided by D8 and E59.

This sequence belongs to the P-Pant transferase superfamily. AcpS family. Mg(2+) is required as a cofactor.

It is found in the cytoplasm. The catalysed reaction is apo-[ACP] + CoA = holo-[ACP] + adenosine 3',5'-bisphosphate + H(+). Its function is as follows. Transfers the 4'-phosphopantetheine moiety from coenzyme A to a Ser of acyl-carrier-protein. The polypeptide is Holo-[acyl-carrier-protein] synthase (Rickettsia conorii (strain ATCC VR-613 / Malish 7)).